The sequence spans 510 residues: Ribonuclease Y (510 aa).

A helical membrane pass occupies residues 1–21; that stretch reads MLIYILSGLGVLVGALLGYVV. The region spanning 200 to 260 is the KH domain; the sequence is TVSTIMLPND…LRREIAKRTI (61 aa). The 94-residue stretch at 326-419 folds into the HD domain; that stretch reads VLNHSIEVAL…VAAADALSAA (94 aa).

This sequence belongs to the RNase Y family.

It localises to the cell membrane. Its function is as follows. Endoribonuclease that initiates mRNA decay. The protein is Ribonuclease Y of Thermosipho melanesiensis (strain DSM 12029 / CIP 104789 / BI429).